A 164-amino-acid chain; its full sequence is Cytochrome c-type biogenesis protein CcmE (164 aa).

Topologically, residues 1-8 (MNPRRQKR) are cytoplasmic. Residues 9–29 (LIVISAIVLVIGAAIGLMLYA) form a helical; Signal-anchor for type II membrane protein membrane-spanning segment. Over 30–164 (LSQNIDLFYT…QAYSTPKVSG (135 aa)) the chain is Periplasmic. Heme contacts are provided by H132 and Y136.

The protein belongs to the CcmE/CycJ family.

The protein localises to the cell inner membrane. Its function is as follows. Heme chaperone required for the biogenesis of c-type cytochromes. Transiently binds heme delivered by CcmC and transfers the heme to apo-cytochromes in a process facilitated by CcmF and CcmH. This chain is Cytochrome c-type biogenesis protein CcmE, found in Pseudoalteromonas atlantica (strain T6c / ATCC BAA-1087).